The sequence spans 125 residues: Temptin (125 aa).

The signal sequence occupies residues 1 to 22 (MEQKRTLRVFLAVSLLCALANA). Disulfide bonds link cysteine 40–cysteine 125 and cysteine 79–cysteine 99. The interval 78-125 (LCDMDSDGDGRSNGVELGDPECVWSQGETPARTTDLSHPGFDEATVSC) is disordered. Residues 103–113 (QGETPARTTDL) are compositionally biased toward polar residues.

Binds to attractin and enticin. Produced by the albumen gland of the egg cordons.

The protein resides in the secreted. In terms of biological role, a component of the complex of water-borne protein pheromones that stimulates attraction and mating behavior. Modulates pheromone signaling by direct binding to attractin. The polypeptide is Temptin (Aplysia californica (California sea hare)).